A 113-amino-acid polypeptide reads, in one-letter code: U11-theraphotoxin-Hhn1e (113 aa).

The first 21 residues, M1–A21, serve as a signal peptide directing secretion. The propeptide occupies D22–R74. Positions L60–N69 are enriched in basic and acidic residues. The interval L60–P87 is disordered. Intrachain disulfides connect C75–C90 and C89–C110.

It belongs to the neurotoxin 14 (magi-1) family. 01 (HNTX-16) subfamily. Expressed by the venom gland.

It is found in the secreted. Functionally, probable ion channel inhibitor. The chain is U11-theraphotoxin-Hhn1e from Cyriopagopus hainanus (Chinese bird spider).